Reading from the N-terminus, the 447-residue chain is Chromosomal replication initiator protein DnaA (447 aa).

Positions 1 to 70 (MQDFWSKAMD…EEILSEQLGE (70 aa)) are domain I, interacts with DnaA modulators. The segment at 70–110 (EPVTLLFAADPALEKPVASKTQTVTPVQSGGETGDQENFHS) is domain II. The interval 87–109 (ASKTQTVTPVQSGGETGDQENFH) is disordered. The segment covering 88 to 99 (SKTQTVTPVQSG) has biased composition (polar residues). Residues 111 to 327 (GLDPRYTFDS…GALIRVSAYA (217 aa)) form a domain III, AAA+ region region. ATP is bound by residues G155, G157, K158, and T159. The tract at residues 328-447 (SLTGKPITMA…LASLKSMLQK (120 aa)) is domain IV, binds dsDNA.

This sequence belongs to the DnaA family. Oligomerizes as a right-handed, spiral filament on DNA at oriC.

It is found in the cytoplasm. Its function is as follows. Plays an essential role in the initiation and regulation of chromosomal replication. ATP-DnaA binds to the origin of replication (oriC) to initiate formation of the DNA replication initiation complex once per cell cycle. Binds the DnaA box (a 9 base pair repeat at the origin) and separates the double-stranded (ds)DNA. Forms a right-handed helical filament on oriC DNA; dsDNA binds to the exterior of the filament while single-stranded (ss)DNA is stabiized in the filament's interior. The ATP-DnaA-oriC complex binds and stabilizes one strand of the AT-rich DNA unwinding element (DUE), permitting loading of DNA polymerase. After initiation quickly degrades to an ADP-DnaA complex that is not apt for DNA replication. Binds acidic phospholipids. The sequence is that of Chromosomal replication initiator protein DnaA from Magnetococcus marinus (strain ATCC BAA-1437 / JCM 17883 / MC-1).